The following is a 110-amino-acid chain: MFEKTNRMNLLFDFYQELLTTKQKAYVSFYYLDDYSLGEIAEEFEVSRQAIYDNIKRTEESLEKYEEKLGMLKKYQQREKLFSELEAQLTKKNFLDEQVKDTLEQLKNID.

This sequence belongs to the UPF0122 family.

Might take part in the signal recognition particle (SRP) pathway. This is inferred from the conservation of its genetic proximity to ftsY/ffh. May be a regulatory protein. The sequence is that of UPF0122 protein lwe1821 from Listeria welshimeri serovar 6b (strain ATCC 35897 / DSM 20650 / CCUG 15529 / CIP 8149 / NCTC 11857 / SLCC 5334 / V8).